A 418-amino-acid polypeptide reads, in one-letter code: MSEFLVNLLGERLVNGEKAEVDVQALGSRLSLLGLYFGCSLNGPCKQFNASLTEFYSKFKKSSEHKDKLEIVFISSDQDQKQWQDFLQEMQWPALPFKDRHKKMKLWNKYKVTSIPSLVFIDAATGKVVCRNGLLVVRDDPKGLEFPWGPKPFAEVVSGPLLRNNRQTTDSTALEGSYVGVYFSAHWCPPCRSLTRVLVESYRKVKETGQKFEIVFVSADRSEESFTQYFSEMPWLAVPYSDEARRSRLNRLYGIQGIPTLILLDTEGHMITRQGRVEILNDPDCGLFPWHPRPVLELSESNAVQLHEGPCLVLFVDAEEEGELDPAKELIQPIAEKIMAKYKAKEEETPLLFFVAGEDDMSDSLRDYTNLPEAAPLLTILDMSARAKYVKDVEEITPAVVEQFVSGFLAEKLKPEPI.

The Thioredoxin domain occupies 109–309 (KYKVTSIPSL…ESNAVQLHEG (201 aa)).

Belongs to the nucleoredoxin family.

It localises to the cytoplasm. It is found in the cytosol. Its subcellular location is the nucleus. It carries out the reaction [protein]-dithiol + NAD(+) = [protein]-disulfide + NADH + H(+). It catalyses the reaction [protein]-dithiol + NADP(+) = [protein]-disulfide + NADPH + H(+). Functionally, functions as a redox-dependent negative regulator of the Wnt signaling pathway. The protein is Nucleoredoxin (nxn) of Danio rerio (Zebrafish).